A 344-amino-acid polypeptide reads, in one-letter code: GDSL esterase/lipase At5g03590 (344 aa).

A signal peptide spans 1–19 (MHYLMKLFFSLSLFFGING). The active-site Nucleophile is serine 41. 3 N-linked (GlcNAc...) asparagine glycosylation sites follow: asparagine 126, asparagine 227, and asparagine 238. Aspartate 318 is an active-site residue.

It belongs to the 'GDSL' lipolytic enzyme family.

The protein resides in the secreted. The polypeptide is GDSL esterase/lipase At5g03590 (Arabidopsis thaliana (Mouse-ear cress)).